Here is a 345-residue protein sequence, read N- to C-terminus: Transcription factor 19 (345 aa).

In terms of domain architecture, FHA spans 31-88 (YRLGHRADLCDVALRPQQEPGLISGIHAELHAEPRGDDWRVSLEDHSSQGTLVNNVRL). Residue serine 78 is modified to Phosphoserine. Disordered regions lie at residues 147–167 (AGFR…STLS) and 190–227 (LTFS…RKSV). The PHD-type zinc-finger motif lies at 293–342 (AAPCCCLPQEETVAWVQCDGCDVWFHVACVGCSIQAAREADFRCPGCRAG). Zn(2+) is bound by residues cysteine 296, cysteine 298, cysteine 310, cysteine 313, histidine 318, cysteine 321, cysteine 336, and cysteine 339.

Its subcellular location is the nucleus. In terms of biological role, potential transcription factor that may play a role in the regulation of genes involved in cell cycle G1/S transition. May bind to regulatory elements of genes, including the promoter of the transcription factor FOXO1. The sequence is that of Transcription factor 19 (TCF19) from Pan troglodytes (Chimpanzee).